A 304-amino-acid polypeptide reads, in one-letter code: Glutaminase (304 aa).

Serine 63, asparagine 113, glutamate 157, asparagine 164, tyrosine 188, tyrosine 240, and valine 258 together coordinate substrate.

This sequence belongs to the glutaminase family. In terms of assembly, homotetramer.

It carries out the reaction L-glutamine + H2O = L-glutamate + NH4(+). This Ralstonia nicotianae (strain ATCC BAA-1114 / GMI1000) (Ralstonia solanacearum) protein is Glutaminase.